Consider the following 255-residue polypeptide: MLQVEGLYLCRGSNEVLHDIHLQLPPGQVVGVLGPNGAGKSSLLSVLCGELAPDRGRVTLQGRPLADWAGQERARRLAVLPQVSSLGFSFRVEEVVGMGRMPHGTGQRRDAEIVEAALRAADAWHLVARSYLALSGGERQRVHLARVLAQLWPGEEGSTLLLDEPTSMLDPLHQHTTLEAVRRFADCGAAVLVILHDLNLAARYCDRILLLEQGRCHAFATPEAALTPAALKAVYGIDVLVQAHPERGHPLIITR.

An ABC transporter domain is found at 2–238 (LQVEGLYLCR…AALKAVYGID (237 aa)). Residue 34 to 41 (GPNGAGKS) participates in ATP binding.

This sequence belongs to the ABC transporter superfamily. Heme (hemin) importer (TC 3.A.1.14.5) family. As to quaternary structure, the complex is composed of two ATP-binding proteins (HmuV), two transmembrane proteins (HmuU) and a solute-binding protein (HmuT).

The protein resides in the cell inner membrane. Its function is as follows. Part of the ABC transporter complex HmuTUV involved in hemin import. Responsible for energy coupling to the transport system. The chain is Hemin import ATP-binding protein HmuV from Pseudomonas putida (strain ATCC 47054 / DSM 6125 / CFBP 8728 / NCIMB 11950 / KT2440).